The following is a 129-amino-acid chain: Small ribosomal subunit protein uS11 (129 aa).

It belongs to the universal ribosomal protein uS11 family. As to quaternary structure, part of the 30S ribosomal subunit. Interacts with proteins S7 and S18. Binds to IF-3.

In terms of biological role, located on the platform of the 30S subunit, it bridges several disparate RNA helices of the 16S rRNA. Forms part of the Shine-Dalgarno cleft in the 70S ribosome. This Thermosipho africanus (strain TCF52B) protein is Small ribosomal subunit protein uS11.